Here is a 331-residue protein sequence, read N- to C-terminus: ADP-L-glycero-D-manno-heptose-6-epimerase (331 aa).

NADP(+) contacts are provided by residues 11–12 (FI), 32–33 (DN), Lys-39, Lys-54, 75–79 (EGACS), and Asn-92. The active-site Proton acceptor is the Tyr-139. Residue Lys-143 coordinates NADP(+). Residue Asn-168 coordinates substrate. NADP(+) contacts are provided by Val-169 and Lys-177. Catalysis depends on Lys-177, which acts as the Proton acceptor. Substrate is bound by residues Arg-179, His-186, 200 to 203 (FGEY), Arg-213, and Tyr-292.

The protein belongs to the NAD(P)-dependent epimerase/dehydratase family. HldD subfamily. In terms of assembly, homopentamer. NADP(+) is required as a cofactor.

It carries out the reaction ADP-D-glycero-beta-D-manno-heptose = ADP-L-glycero-beta-D-manno-heptose. It participates in nucleotide-sugar biosynthesis; ADP-L-glycero-beta-D-manno-heptose biosynthesis; ADP-L-glycero-beta-D-manno-heptose from D-glycero-beta-D-manno-heptose 7-phosphate: step 4/4. Catalyzes the interconversion between ADP-D-glycero-beta-D-manno-heptose and ADP-L-glycero-beta-D-manno-heptose via an epimerization at carbon 6 of the heptose. This is ADP-L-glycero-D-manno-heptose-6-epimerase from Cupriavidus taiwanensis (strain DSM 17343 / BCRC 17206 / CCUG 44338 / CIP 107171 / LMG 19424 / R1) (Ralstonia taiwanensis (strain LMG 19424)).